We begin with the raw amino-acid sequence, 733 residues long: Protein PAT1 homolog 2 (733 aa).

Disordered regions lie at residues 42 to 75 and 337 to 366; these read LDQE…PEAL and LHPQ…PDPY. Residues 49–59 are compositionally biased toward basic and acidic residues; sequence EPVKLEDDHTK. The segment covering 346–356 has biased composition (low complexity); that stretch reads SQRQRPQSSSR.

Belongs to the PAT1 family. As to quaternary structure, interacts with ribonucleoprotein complex components. Interacts with cpeb. As to expression, oocyte-specific protein. Expressed throughout oogenesis but is not detectable in eggs, embryos, nor in adult tissues (at protein level).

It is found in the cytoplasm. Its subcellular location is the nucleus. In terms of biological role, RNA-binding protein that acts as a translational repressor. When overexpressed, able to disperse P-bodies. This Xenopus laevis (African clawed frog) protein is Protein PAT1 homolog 2 (patl2).